Reading from the N-terminus, the 1500-residue chain is Carbamoyl-phosphate synthase [ammonia], mitochondrial (1500 aa).

The N-terminal 38 residues, 1 to 38, are a transit peptide targeting the mitochondrion; the sequence is MTRILTACKVVKTLKSGFGLANVTSKRQWDFSRPGIRL. The tract at residues 39 to 218 is anthranilate phosphoribosyltransferase homolog; that stretch reads LSVKAQTAHI…VKVFGKGNPT (180 aa). Residues K55, K57, and K119 each carry the N6-acetyllysine; alternate modification. K55 bears the N6-glutaryllysine; alternate mark. 3 positions are modified to N6-succinyllysine; alternate: K55, K57, and K119. S148 carries the phosphoserine modification. K157 and K171 each carry N6-acetyllysine; alternate. K157 carries the N6-succinyllysine; alternate modification. Position 171 is an N6-glutaryllysine; alternate (K171). Residue K176 is modified to N6-glutaryllysine. Residue K182 is modified to N6-acetyllysine. Position 189 is a phosphoserine (S189). K197 carries the N6-acetyllysine modification. N6-acetyllysine; alternate is present on residues K207, K210, K214, K219, and K228. An N6-glutaryllysine; alternate mark is found at K207, K210, K214, K219, and K228. K207 carries the N6-succinyllysine; alternate modification. The residue at position 214 (K214) is an N6-succinyllysine; alternate. One can recognise a Glutamine amidotransferase type-1 domain in the interval 219-404; it reads KVVAVDCGIK…FSLIKKGKGT (186 aa). K237 is subject to N6-glutaryllysine. The residue at position 279 (K279) is an N6-acetyllysine. N6-acetyllysine; alternate is present on residues K280, K287, K307, and K310. K280 is modified (N6-glutaryllysine; alternate). 2 positions are modified to N6-succinyllysine; alternate: K287 and K307. N6-glutaryllysine; alternate occurs at positions 307 and 310. The residue at position 400 (K400) is an N6-succinyllysine. 4 positions are modified to N6-glutaryllysine; alternate: K402, K412, K453, and K458. 2 positions are modified to N6-succinyllysine; alternate: K402 and K412. Residues K412, K453, K458, K522, K527, and K532 each carry the N6-acetyllysine; alternate modification. An N6-succinyllysine; alternate mark is found at K458, K522, and K527. Residues K527 and K532 each carry the N6-glutaryllysine; alternate modification. S537 carries the phosphoserine; alternate modification. Residue S537 is glycosylated (O-linked (GlcNAc) serine; alternate). A Phosphoserine modification is found at S540. Residues 551-743 form the ATP-grasp 1 domain; it reads SDKLNEINEK…LAFIAAKIAL (193 aa). N6-acetyllysine; alternate occurs at positions 553 and 560. Residue K553 is modified to N6-glutaryllysine; alternate. N6-succinyllysine; alternate is present on residues K553 and K560. Residue S569 is modified to Phosphoserine. Residues K575, K603, and K612 each carry the N6-acetyllysine; alternate modification. N6-succinyllysine; alternate occurs at positions 575, 603, and 612. N6-acetyllysine is present on K630. K728 is subject to N6-glutaryllysine. An N6-acetyllysine; alternate mark is found at K751, K757, K772, K793, K811, K831, K841, and K856. 2 positions are modified to N6-succinyllysine; alternate: K751 and K757. 4 positions are modified to N6-glutaryllysine; alternate: K757, K772, K793, and K811. K793 carries the post-translational modification N6-succinyllysine; alternate. At K831 the chain carries N6-succinyllysine; alternate. K841 and K856 each carry N6-glutaryllysine; alternate. K869 carries the N6-glutaryllysine modification. N6-acetyllysine; alternate occurs at positions 875, 889, and 892. N6-glutaryllysine; alternate occurs at positions 875, 889, and 892. Residues K875, K889, and K892 each carry the N6-succinyllysine; alternate modification. Phosphoserine is present on residues S896 and S898. N6-acetyllysine; alternate is present on residues K908, K915, and K919. 3 positions are modified to N6-glutaryllysine; alternate: K908, K915, and K919. Residues K915 and K919 each carry the N6-succinyllysine; alternate modification. An N6-acetyllysine modification is found at K935. S1036 is subject to Phosphoserine. Position 1074 is an N6-acetyllysine; alternate (K1074). K1074 bears the N6-glutaryllysine; alternate mark. K1074 carries the post-translational modification N6-succinyllysine; alternate. Residues S1079, S1090, and S1093 each carry the phosphoserine modification. The 192-residue stretch at 1093 to 1284 folds into the ATP-grasp 2 domain; sequence SAVLDELKVA…FIDVATKVMI (192 aa). Residue K1100 is modified to N6-acetyllysine; alternate. At K1100 the chain carries N6-succinyllysine; alternate. K1149 bears the N6-succinyllysine mark. 2 positions are modified to N6-acetyllysine; alternate: K1168 and K1183. Residues K1168 and K1183 each carry the N6-glutaryllysine; alternate modification. Residues K1168 and K1183 each carry the N6-succinyllysine; alternate modification. S1203 is subject to Phosphoserine. K1222 is modified (N6-acetyllysine). K1224 is modified (N6-glutaryllysine). K1232, K1269, and K1291 each carry N6-acetyllysine; alternate. An N6-succinyllysine; alternate mark is found at K1232, K1269, and K1291. O-linked (GlcNAc) serine glycosylation occurs at S1331. An O-linked (GlcNAc) threonine glycan is attached at T1332. Positions 1355–1500 constitute an MGS-like domain; it reads FKIPQKGILI…YRQYSAGKAA (146 aa). K1356 bears the N6-acetyllysine; alternate mark. Residues K1356 and K1360 each carry the N6-glutaryllysine; alternate modification. K1356 and K1360 each carry N6-succinyllysine; alternate. Residues T1391, T1394, and W1410 each contribute to the N-acetyl-L-glutamate site. 2 positions are modified to phosphoserine: S1419 and S1431. The N-acetyl-L-glutamate site is built by N1437 and N1440. N6-acetyllysine; alternate is present on K1444. An N6-succinyllysine; alternate modification is found at K1444. N1449 lines the N-acetyl-L-glutamate pocket. Residues K1471, K1479, and K1486 each carry the N6-acetyllysine; alternate modification. N6-succinyllysine; alternate is present on residues K1471, K1479, and K1486. N6-glutaryllysine; alternate occurs at positions 1479 and 1486.

In terms of assembly, can form homooligomers (monomers as predominant form and dimers). Post-translationally, 50% of the mature protein that was isolated had Leu-39 as its N-terminal residue and 50% had Ser-40 suggesting two adjacent processing sites. However, the possibility of proteolytic removal of Leu-39 during the isolation of the enzyme cannot be excluded. Undergoes proteolytic cleavage in the C-terminal region corresponding to the loss of approximately 12 AA residues from the C-terminus. In terms of processing, succinylated at Lys-287 and Lys-1291. Desuccinylated at Lys-1291 by SIRT5, leading to activation. Glutarylated. Glutarylation levels increase during fasting. Deglutarylated by SIRT5 at Lys-55, Lys-219, Lys-412, Lys-889, Lys-892, Lys-915, Lys-1360 and Lys-1486, leading to activation. In terms of tissue distribution, primarily in the liver and small intestine.

The protein resides in the mitochondrion. It is found in the nucleus. It localises to the nucleolus. Its subcellular location is the cell membrane. It catalyses the reaction hydrogencarbonate + NH4(+) + 2 ATP = carbamoyl phosphate + 2 ADP + phosphate + 2 H(+). With respect to regulation, requires N-acetyl-L-glutamate (NAG) as an allosteric activator. N-acetyl-L-beta-phenylglutamate (Phe-NAG) can also activate CPSase I, but with an activation constant that is 2-fold higher than that for NAG. Its function is as follows. Involved in the urea cycle of ureotelic animals where the enzyme plays an important role in removing excess ammonia from the cell. The polypeptide is Carbamoyl-phosphate synthase [ammonia], mitochondrial (Cps1) (Rattus norvegicus (Rat)).